The sequence spans 463 residues: A-type ATP synthase subunit B (463 aa).

It belongs to the ATPase alpha/beta chains family. In terms of assembly, has multiple subunits with at least A(3), B(3), C, D, E, F, H, I and proteolipid K(x).

It localises to the cell membrane. In terms of biological role, component of the A-type ATP synthase that produces ATP from ADP in the presence of a proton gradient across the membrane. The B chain is a regulatory subunit. In Methanothrix thermoacetophila (strain DSM 6194 / JCM 14653 / NBRC 101360 / PT) (Methanosaeta thermophila), this protein is A-type ATP synthase subunit B.